A 5147-amino-acid chain; its full sequence is Cadherin-related tumor suppressor (5147 aa).

A signal peptide spans M1 to S35. Cadherin domains follow at residues Y36–F156, P157–F270, D271–I382, S383–F494, E495–F599, S600–F708, Y709–L820, E821–F942, A943–F1049, D1050–F1153, T1154–F1278, L1279–F1384, T1385–F1489, P1490–F1601, V1602–F1713, E1714–F1823, L1824–F1922, E1923–F2027, D2028–F2167, I2168–F2278, D2279–L2385, D2386–F2491, E2492–F2596, D2597–F2703, A2704–M2810, E2811–F2913, T2914–F3013, E3014–F3124, E3125–F3229, S3230–F3334, N3335–F3439, L3440–F3545, I3546–F3651, and T3652–T3756. At Y36–P4583 the chain is on the extracellular side. N-linked (GlcNAc...) asparagine glycosylation is found at N239, N257, N276, N280, N402, and N461. N-linked (GlcNAc...) asparagine glycans are attached at residues N605 and N631. N-linked (GlcNAc...) asparagine glycosylation is found at N1155, N1367, and N1458. Residues N1751, N1831, and N1880 are each glycosylated (N-linked (GlcNAc...) asparagine). N-linked (GlcNAc...) asparagine glycans are attached at residues N2080, N2171, N2247, N2290, N2437, and N2581. N2799 carries N-linked (GlcNAc...) asparagine glycosylation. N2920, N2946, and N2967 each carry an N-linked (GlcNAc...) asparagine glycan. 5 N-linked (GlcNAc...) asparagine glycosylation sites follow: N3167, N3303, N3386, N3389, and N3525. N-linked (GlcNAc...) asparagine glycans are attached at residues N3852, N3865, and N3905. EGF-like domains follow at residues G3950 to S4011, R4013 to E4049, R4052 to E4090, and V4092 to E4128. 16 cysteine pairs are disulfide-bonded: C3954-C3966, C3960-C3999, C4001-C4010, C4017-C4028, C4022-C4037, C4039-C4048, C4056-C4067, C4061-C4078, C4080-C4089, C4096-C4107, C4101-C4116, C4118-C4127, C4294-C4320, C4325-C4341, C4334-C4350, and C4352-C4361. The 192-residue stretch at R4129–C4320 folds into the Laminin G-like 1 domain. N-linked (GlcNAc...) asparagine glycosylation is present at N4306. An EGF-like 5 domain is found at N4321–S4362. Residues D4402–C4569 form the Laminin G-like 2 domain. N4414, N4471, N4487, N4539, and N4550 each carry an N-linked (GlcNAc...) asparagine glycan. An intrachain disulfide couples C4536 to C4569. Residues L4584–Y4609 traverse the membrane as a helical segment. Over R4610–V5147 the chain is Cytoplasmic. An essential for stability of mitochondrial electron chain complexes I and V, and promotes interaction with ND-24 region spans residues P4744–E4771. Disordered regions lie at residues A4787–P4850, T4871–M4921, and G4967–P5041. The span at S4826 to P4835 shows a compositional bias: polar residues. 2 stretches are compositionally biased toward low complexity: residues R4838–P4850 and S4891–Q4918. S4843 bears the Phosphoserine mark. Over residues H4972 to S5008 the composition is skewed to polar residues. A phosphoserine mark is found at S5054 and S5061. Residues P5113–V5147 form a disordered region. The segment covering S5119–T5131 has biased composition (low complexity).

As to quaternary structure, interacts with Fbxl7. Ft-mito interacts with NADH dehydrogenase subunit ND-24 and with ATP synthase subunit ATPsynC. Post-translationally, phosphorylated by fj on Ser/Thr of cadherin domains. Phosphorylation by fj enhances binding to ds. Phosphorylated in the cytoplasmic domain in a dco-dependent manner which is promoted by ds. Proteolytically cleaved to yield stably associated N- and C-terminal fragments. The C-terminal fragment is processed further to release a 68 kDa mitochondrial fragment, Ft-mito.

It is found in the cell membrane. The protein resides in the apical cell membrane. Its subcellular location is the mitochondrion. Functionally, involved in regulation of planar cell polarity in the compound eye where it is required for correct specification of the R3 and R4 photoreceptor cells by regulating Fz activity in the R3/R4 precursor cells. This is likely to occur through creation of an ft gradient so that the equatorial R3/R4 precursor cell has a higher level of ft function than its polar neighbor. Also required for planar cell polarity of wing hairs. Mediates heterophilic cell adhesion in vitro and is required to stabilize ds on the cell surface. Involved in regulation of eye imaginal disk size. Upstream component of the Hippo pathway where it is likely to act as a cell surface receptor involved in regulation of tissue size and is required for the localization and stability of ex. Probably acts as a cell surface receptor for ds. In terms of biological role, regulates mitochondrial electron transport chain integrity and promotes oxidative phosphorylation. This Drosophila melanogaster (Fruit fly) protein is Cadherin-related tumor suppressor.